Reading from the N-terminus, the 515-residue chain is ATP-dependent rRNA helicase rrp-3 (515 aa).

The tract at residues Met-1–Val-85 is disordered. Positions Leu-15 to Pro-24 are enriched in low complexity. Over residues Glu-25 to Ala-55 the composition is skewed to basic and acidic residues. Residues Thr-69–Val-85 are compositionally biased toward acidic residues. The short motif at Lys-90 to Glu-118 is the Q motif element. Residues Ile-121–Val-292 enclose the Helicase ATP-binding domain. Residue Ala-134–Thr-141 participates in ATP binding. The short motif at Asp-240 to Asp-243 is the DEAD box element. In terms of domain architecture, Helicase C-terminal spans His-316–Met-464. The interval Lys-482–Gly-515 is disordered. A compositionally biased stretch (basic and acidic residues) spans Gly-506 to Gly-515.

The protein belongs to the DEAD box helicase family. DDX47/RRP3 subfamily.

The protein resides in the nucleus. Its function is as follows. Required for pre-ribosomal RNA processing. Involved in the maturation of the 35S-pre-rRNA and to its cleavage to mature 18S rRNA. In Neurospora crassa (strain ATCC 24698 / 74-OR23-1A / CBS 708.71 / DSM 1257 / FGSC 987), this protein is ATP-dependent rRNA helicase rrp-3 (rrp-3).